The chain runs to 146 residues: uncharacterized protein (146 aa).

The chain crosses the membrane as a helical span at residues 7–27 (FVLSITIVLVILIIIAFIWYN).

Belongs to the asfivirus E146L family.

Its subcellular location is the host membrane. The protein localises to the virion. This is an uncharacterized protein from Ornithodoros (relapsing fever ticks).